Consider the following 437-residue polypeptide: GTPase Era, mitochondrial (437 aa).

A mitochondrion-targeting transit peptide spans 1-20 (MAAPRRYCAGLVRALLGARQ). Positions 112-330 (RVLRVVLLGA…QYLLTQAQPG (219 aa)) constitute an Era-type G domain. The tract at residues 120-127 (GAPNAGKS) is G1. 120–127 (GAPNAGKS) lines the GTP pocket. Residues 146–150 (HTTRC) are G2. The segment at 167 to 170 (DTPG) is G3. 167-171 (DTPGI) contacts GTP. Ser173 bears the Phosphoserine mark. Position 236–239 (236–239 (NKVD)) interacts with GTP. The segment at 236–239 (NKVD) is G4. Positions 270–292 (LRSRSSTHCPGPETEGPNAHSVR) are disordered. The tract at residues 308 to 310 (LSA) is G5. A KH type-2 domain is found at 360-437 (LPEEVPYGVQ…LIRLSVKLLK (78 aa)).

It belongs to the TRAFAC class TrmE-Era-EngA-EngB-Septin-like GTPase superfamily. Era GTPase family.

It is found in the mitochondrion matrix. The protein localises to the mitochondrion inner membrane. In terms of biological role, probable GTPase that plays a role in the mitochondrial ribosomal small subunit assembly. Specifically binds the 12S mitochondrial rRNA (12S mt-rRNA) to a 33 nucleotide section delineating the 3' terminal stem-loop region. May act as a chaperone that protects the 12S mt-rRNA on the 28S mitoribosomal subunit during ribosomal small subunit assembly. In Mus musculus (Mouse), this protein is GTPase Era, mitochondrial (Eral1).